We begin with the raw amino-acid sequence, 207 residues long: Uracil phosphoribosyltransferase (207 aa).

Residues R77, R102, and 129-137 (DPMLATGGS) each bind 5-phospho-alpha-D-ribose 1-diphosphate. Residues I192 and 197-199 (GDA) each bind uracil. D198 is a 5-phospho-alpha-D-ribose 1-diphosphate binding site.

It belongs to the UPRTase family. The cofactor is Mg(2+).

The enzyme catalyses UMP + diphosphate = 5-phospho-alpha-D-ribose 1-diphosphate + uracil. The protein operates within pyrimidine metabolism; UMP biosynthesis via salvage pathway; UMP from uracil: step 1/1. With respect to regulation, allosterically activated by GTP. Its function is as follows. Catalyzes the conversion of uracil and 5-phospho-alpha-D-ribose 1-diphosphate (PRPP) to UMP and diphosphate. The protein is Uracil phosphoribosyltransferase of Mycoplasma capricolum subsp. capricolum (strain California kid / ATCC 27343 / NCTC 10154).